A 111-amino-acid polypeptide reads, in one-letter code: DNA-directed RNA polymerase subunit Rpo11 (111 aa).

It belongs to the archaeal Rpo11/eukaryotic RPB11/RPC19 RNA polymerase subunit family. As to quaternary structure, part of the RNA polymerase complex.

Its subcellular location is the cytoplasm. The enzyme catalyses RNA(n) + a ribonucleoside 5'-triphosphate = RNA(n+1) + diphosphate. DNA-dependent RNA polymerase (RNAP) catalyzes the transcription of DNA into RNA using the four ribonucleoside triphosphates as substrates. The polypeptide is DNA-directed RNA polymerase subunit Rpo11 (Thermoplasma acidophilum (strain ATCC 25905 / DSM 1728 / JCM 9062 / NBRC 15155 / AMRC-C165)).